Reading from the N-terminus, the 353-residue chain is Putative glycosyltransferase TagX (353 aa).

This sequence belongs to the glycosyltransferase 2 family.

This Staphylococcus aureus (strain Mu50 / ATCC 700699) protein is Putative glycosyltransferase TagX (tagX).